The following is a 109-amino-acid chain: UPF0449 protein C19orf25 homolog (109 aa).

Tyr63 bears the Phosphotyrosine mark.

Belongs to the UPF0449 family.

The sequence is that of UPF0449 protein C19orf25 homolog from Rattus norvegicus (Rat).